The following is a 201-amino-acid chain: Superoxide dismutase [Mn] (201 aa).

Mn(2+) is bound by residues His-27, His-81, Asp-163, and His-167.

Belongs to the iron/manganese superoxide dismutase family. Homodimer. Mn(2+) serves as cofactor.

The protein resides in the secreted. The enzyme catalyses 2 superoxide + 2 H(+) = H2O2 + O2. Functionally, destroys superoxide anion radicals which are normally produced within the cells and which are toxic to biological systems. This Streptococcus pyogenes serotype M1 protein is Superoxide dismutase [Mn] (sodA).